Consider the following 405-residue polypeptide: Cytoplasmic tRNA 2-thiolation protein 2 (405 aa).

Belongs to the CTU2/NCS2 family.

The protein resides in the cytoplasm. It participates in tRNA modification; 5-methoxycarbonylmethyl-2-thiouridine-tRNA biosynthesis. Its function is as follows. Plays a central role in 2-thiolation of mcm(5)S(2)U at tRNA wobble positions of tRNA(Lys), tRNA(Glu) and tRNA(Gln). May act by forming a heterodimer with NCS6/CTU1 that ligates sulfur from thiocarboxylated URM1 onto the uridine of tRNAs at wobble position. This is Cytoplasmic tRNA 2-thiolation protein 2 from Drosophila pseudoobscura pseudoobscura (Fruit fly).